The following is a 359-amino-acid chain: MSMNNSKQLVSPAAALLSNTTCQTENRLSVFFSVIFMTVGILSNSLAIAILMKAYQRFRQKSKASFLLLASGLVITDFFGHLINGAIAVFVYASDKEWIRFDQSNVLCSIFGICMVFSGLCPLLLGSVMAIERCIGVTKPIFHSTKITSKHVKMMLSGVCLFAVFIALLPILGHRDYKIQASRTWCFYNTEDIKDWEDRFYLLLFSFLGLLALGVSLLCNAITGITLLRVKFKSQQHRQGRSHHLEMVIQLLAIMCVSCICWSPFLVTMANIGINGNHSLETCETTLFALRMATWNQILDPWVYILLRKAVLKNLYKLASQCCGVHVISLHIWELSSIKNSLKVAAISESPVAEKSAST.

Residues 1–31 lie on the Extracellular side of the membrane; it reads MSMNNSKQLVSPAAALLSNTTCQTENRLSVF. Asparagine 4 and asparagine 19 each carry an N-linked (GlcNAc...) asparagine glycan. A helical transmembrane segment spans residues 32-54; that stretch reads FSVIFMTVGILSNSLAIAILMKA. Topologically, residues 55–69 are cytoplasmic; the sequence is YQRFRQKSKASFLLL. Residues 70–90 form a helical membrane-spanning segment; that stretch reads ASGLVITDFFGHLINGAIAVF. The Extracellular portion of the chain corresponds to 91–109; it reads VYASDKEWIRFDQSNVLCS. A disulfide bond links cysteine 108 and cysteine 186. Residues 110 to 131 traverse the membrane as a helical segment; it reads IFGICMVFSGLCPLLLGSVMAI. Residues 132 to 152 lie on the Cytoplasmic side of the membrane; that stretch reads ERCIGVTKPIFHSTKITSKHV. A helical transmembrane segment spans residues 153 to 175; that stretch reads KMMLSGVCLFAVFIALLPILGHR. Residues 176 to 198 are Extracellular-facing; that stretch reads DYKIQASRTWCFYNTEDIKDWED. A helical transmembrane segment spans residues 199–224; the sequence is RFYLLLFSFLGLLALGVSLLCNAITG. Topologically, residues 225 to 250 are cytoplasmic; the sequence is ITLLRVKFKSQQHRQGRSHHLEMVIQ. Residues 251–267 form a helical membrane-spanning segment; that stretch reads LLAIMCVSCICWSPFLV. The Extracellular portion of the chain corresponds to 268–285; sequence TMANIGINGNHSLETCET. A helical transmembrane segment spans residues 286–307; that stretch reads TLFALRMATWNQILDPWVYILL. Over 308–359 the chain is Cytoplasmic; it reads RKAVLKNLYKLASQCCGVHVISLHIWELSSIKNSLKVAAISESPVAEKSAST.

It belongs to the G-protein coupled receptor 1 family. As to quaternary structure, isoform 1 can form heterodimers with isoform 5 (and probably other isoforms). In terms of tissue distribution, eye.

It localises to the cell membrane. In terms of biological role, receptor for prostaglandin F2-alpha (PGF2-alpha). The activity of this receptor is mediated by G proteins which activate a phosphatidylinositol-calcium second messenger system. Initiates luteolysis in the corpus luteum. Isoforms 2 to 7 do not bind PGF2-alpha but are proposed to modulate signaling by participating in variant receptor complexes; heterodimers between isoform 1 and isoform 5 are proposed to be a receptor for prostamides including the synthetic analog bimatoprost. The protein is Prostaglandin F2-alpha receptor (PTGFR) of Homo sapiens (Human).